The following is a 570-amino-acid chain: Sulfite reductase [NADPH] hemoprotein beta-component (570 aa).

Residues C434, C440, C479, and C483 each contribute to the [4Fe-4S] cluster site. Residue C483 participates in siroheme binding.

This sequence belongs to the nitrite and sulfite reductase 4Fe-4S domain family. As to quaternary structure, alpha(8)-beta(8). The alpha component is a flavoprotein, the beta component is a hemoprotein. Siroheme serves as cofactor. The cofactor is [4Fe-4S] cluster.

It carries out the reaction hydrogen sulfide + 3 NADP(+) + 3 H2O = sulfite + 3 NADPH + 4 H(+). The protein operates within sulfur metabolism; hydrogen sulfide biosynthesis; hydrogen sulfide from sulfite (NADPH route): step 1/1. In terms of biological role, component of the sulfite reductase complex that catalyzes the 6-electron reduction of sulfite to sulfide. This is one of several activities required for the biosynthesis of L-cysteine from sulfate. The protein is Sulfite reductase [NADPH] hemoprotein beta-component of Escherichia coli O127:H6 (strain E2348/69 / EPEC).